A 68-amino-acid chain; its full sequence is Protein SlyX homolog (68 aa).

This sequence belongs to the SlyX family.

The protein is Protein SlyX homolog of Pseudomonas fluorescens (strain Pf0-1).